Reading from the N-terminus, the 224-residue chain is Glycerol-3-phosphate acyltransferase (224 aa).

The next 6 membrane-spanning stretches (helical) occupy residues 3 to 23 (IFLS…IGSL), 54 to 74 (VFGY…VVFA), 90 to 112 (LYFY…PIYF), 127 to 147 (LISI…LLLF), 152 to 172 (VSLS…IPWM), and 183 to 203 (GFGQ…LIFW).

The protein belongs to the PlsY family. As to quaternary structure, probably interacts with PlsX.

Its subcellular location is the cell membrane. The enzyme catalyses an acyl phosphate + sn-glycerol 3-phosphate = a 1-acyl-sn-glycero-3-phosphate + phosphate. Its pathway is lipid metabolism; phospholipid metabolism. In terms of biological role, catalyzes the transfer of an acyl group from acyl-phosphate (acyl-PO(4)) to glycerol-3-phosphate (G3P) to form lysophosphatidic acid (LPA). This enzyme utilizes acyl-phosphate as fatty acyl donor, but not acyl-CoA or acyl-ACP. This Mycoplasmopsis synoviae (strain 53) (Mycoplasma synoviae) protein is Glycerol-3-phosphate acyltransferase.